The chain runs to 155 residues: Endoribonuclease YbeY (155 aa).

H114, H118, and H124 together coordinate Zn(2+).

The protein belongs to the endoribonuclease YbeY family. The cofactor is Zn(2+).

It localises to the cytoplasm. Functionally, single strand-specific metallo-endoribonuclease involved in late-stage 70S ribosome quality control and in maturation of the 3' terminus of the 16S rRNA. This is Endoribonuclease YbeY from Citrobacter koseri (strain ATCC BAA-895 / CDC 4225-83 / SGSC4696).